A 137-amino-acid chain; its full sequence is Basic phospholipase A2 DsM-S1 (137 aa).

An N-terminal signal peptide occupies residues 1–16 (MRTLWIVAVCLIGVEG). Intrachain disulfides connect C42-C131, C44-C60, C59-C111, C65-C137, C66-C104, C73-C97, and C91-C102. Ca(2+) is bound by residues Y43, G45, and G47. H63 is a catalytic residue. Ca(2+) is bound at residue D64. The active site involves D105.

The protein belongs to the phospholipase A2 family. Group II subfamily. D49 sub-subfamily. Ca(2+) is required as a cofactor. Expressed by the venom gland.

The protein resides in the secreted. It carries out the reaction a 1,2-diacyl-sn-glycero-3-phosphocholine + H2O = a 1-acyl-sn-glycero-3-phosphocholine + a fatty acid + H(+). In terms of biological role, snake venom phospholipase A2 (PLA2) that is neurotoxic. PLA2 catalyzes the calcium-dependent hydrolysis of the 2-acyl groups in 3-sn-phosphoglycerides. This is Basic phospholipase A2 DsM-S1 from Daboia siamensis (Eastern Russel's viper).